Here is an 84-residue protein sequence, read N- to C-terminus: Putative pelota-like protein YCL001W-B (84 aa).

Belongs to the eukaryotic release factor 1 family. Pelota subfamily. Highly divergent.

This Saccharomyces cerevisiae (strain ATCC 204508 / S288c) (Baker's yeast) protein is Putative pelota-like protein YCL001W-B.